A 188-amino-acid chain; its full sequence is Apolipoprotein M (188 aa).

Residues 1-22 (MFHQIWAALLYLYGILLNSIYQ) constitute a signal peptide (not cleaved). 3 disulfides stabilise this stretch: C23/C167, C95/C183, and C128/C157. The tetradecanoate site is built by E136 and R143.

This sequence belongs to the calycin superfamily. Lipocalin family. Highly divergent. In terms of assembly, interacts with LRP2; LRP2 mediates APOM renal uptake and subsequent lysosomal degradation.

The protein localises to the secreted. Functionally, probably involved in lipid transport. Can bind sphingosine-1-phosphate, myristic acid, palmitic acid and stearic acid, retinol, all-trans-retinoic acid and 9-cis-retinoic acid. The protein is Apolipoprotein M (APOM) of Sus scrofa (Pig).